A 284-amino-acid polypeptide reads, in one-letter code: Acetyl-coenzyme A carboxylase carboxyl transferase subunit beta (284 aa).

The CoA carboxyltransferase N-terminal domain occupies 24–284 (GLWYKSPTGK…LDLILNNEVR (261 aa)).

It belongs to the AccD/PCCB family. Acetyl-CoA carboxylase is a heterohexamer composed of biotin carboxyl carrier protein (AccB), biotin carboxylase (AccC) and two subunits each of ACCase subunit alpha (AccA) and ACCase subunit beta (AccD).

Its subcellular location is the cytoplasm. It catalyses the reaction N(6)-carboxybiotinyl-L-lysyl-[protein] + acetyl-CoA = N(6)-biotinyl-L-lysyl-[protein] + malonyl-CoA. It participates in lipid metabolism; malonyl-CoA biosynthesis; malonyl-CoA from acetyl-CoA: step 1/1. Functionally, component of the acetyl coenzyme A carboxylase (ACC) complex. Biotin carboxylase (BC) catalyzes the carboxylation of biotin on its carrier protein (BCCP) and then the CO(2) group is transferred by the transcarboxylase to acetyl-CoA to form malonyl-CoA. The chain is Acetyl-coenzyme A carboxylase carboxyl transferase subunit beta from Flavobacterium psychrophilum (strain ATCC 49511 / DSM 21280 / CIP 103535 / JIP02/86).